We begin with the raw amino-acid sequence, 313 residues long: Beta-ketoacyl-[acyl-carrier-protein] synthase III (313 aa).

Residues C112 and H238 contribute to the active site. Positions 239–243 are ACP-binding; the sequence is QANIR. N268 is a catalytic residue.

It belongs to the thiolase-like superfamily. FabH family. As to quaternary structure, homodimer.

It is found in the cytoplasm. It carries out the reaction malonyl-[ACP] + acetyl-CoA + H(+) = 3-oxobutanoyl-[ACP] + CO2 + CoA. The protein operates within lipid metabolism; fatty acid biosynthesis. Its function is as follows. Catalyzes the condensation reaction of fatty acid synthesis by the addition to an acyl acceptor of two carbons from malonyl-ACP. Catalyzes the first condensation reaction which initiates fatty acid synthesis and may therefore play a role in governing the total rate of fatty acid production. Possesses both acetoacetyl-ACP synthase and acetyl transacylase activities. Its substrate specificity determines the biosynthesis of branched-chain and/or straight-chain of fatty acids. The chain is Beta-ketoacyl-[acyl-carrier-protein] synthase III from Staphylococcus epidermidis (strain ATCC 35984 / DSM 28319 / BCRC 17069 / CCUG 31568 / BM 3577 / RP62A).